Consider the following 159-residue polypeptide: Crossover junction endodeoxyribonuclease RuvC (159 aa).

Catalysis depends on residues D7, E66, and D139. 3 residues coordinate Mg(2+): D7, E66, and D139.

The protein belongs to the RuvC family. Homodimer which binds Holliday junction (HJ) DNA. The HJ becomes 2-fold symmetrical on binding to RuvC with unstacked arms; it has a different conformation from HJ DNA in complex with RuvA. In the full resolvosome a probable DNA-RuvA(4)-RuvB(12)-RuvC(2) complex forms which resolves the HJ. Mg(2+) is required as a cofactor.

It is found in the cytoplasm. The enzyme catalyses Endonucleolytic cleavage at a junction such as a reciprocal single-stranded crossover between two homologous DNA duplexes (Holliday junction).. Functionally, the RuvA-RuvB-RuvC complex processes Holliday junction (HJ) DNA during genetic recombination and DNA repair. Endonuclease that resolves HJ intermediates. Cleaves cruciform DNA by making single-stranded nicks across the HJ at symmetrical positions within the homologous arms, yielding a 5'-phosphate and a 3'-hydroxyl group; requires a central core of homology in the junction. The consensus cleavage sequence is 5'-(A/T)TT(C/G)-3'. Cleavage occurs on the 3'-side of the TT dinucleotide at the point of strand exchange. HJ branch migration catalyzed by RuvA-RuvB allows RuvC to scan DNA until it finds its consensus sequence, where it cleaves and resolves the cruciform DNA. This is Crossover junction endodeoxyribonuclease RuvC from Sulfurovum sp. (strain NBC37-1).